The following is a 684-amino-acid chain: Glycine--tRNA ligase beta subunit (684 aa).

It belongs to the class-II aminoacyl-tRNA synthetase family. Tetramer of two alpha and two beta subunits.

It is found in the cytoplasm. It carries out the reaction tRNA(Gly) + glycine + ATP = glycyl-tRNA(Gly) + AMP + diphosphate. This Pseudomonas syringae pv. syringae (strain B728a) protein is Glycine--tRNA ligase beta subunit.